Reading from the N-terminus, the 427-residue chain is Tuberculostearic acid methyltransferase UfaA1 (427 aa).

The protein belongs to the CFA/CMAS family.

The protein operates within lipid metabolism; fatty acid biosynthesis. Inhibited by S-adenosyl-L-homocysteine. Its function is as follows. Involved in the biosynthesis of the tuberculostearic acid (10-methylstearic-acid or TSA), a constituent lipid of the mycobacterial cell wall. Catalyzes the transfer of the methyl group from S-adenosyl-L-methionine (SAM) to the double bond of oleic acid in phosphatidylethanolamine or phosphatidylcholine to produce TSA. This Mycobacterium tuberculosis (strain ATCC 25618 / H37Rv) protein is Tuberculostearic acid methyltransferase UfaA1.